Consider the following 197-residue polypeptide: Glycerol-3-phosphate acyltransferase (197 aa).

5 helical membrane passes run 1–21, 78–98, 111–131, 136–155, and 159–176; these read MNIL…GFLI, LIEV…IWLG, MFLA…LIVL, FVSL…MFFY, and FIHT…LVIW.

The protein belongs to the PlsY family. In terms of assembly, probably interacts with PlsX.

The protein localises to the cell inner membrane. The enzyme catalyses an acyl phosphate + sn-glycerol 3-phosphate = a 1-acyl-sn-glycero-3-phosphate + phosphate. The protein operates within lipid metabolism; phospholipid metabolism. In terms of biological role, catalyzes the transfer of an acyl group from acyl-phosphate (acyl-PO(4)) to glycerol-3-phosphate (G3P) to form lysophosphatidic acid (LPA). This enzyme utilizes acyl-phosphate as fatty acyl donor, but not acyl-CoA or acyl-ACP. The protein is Glycerol-3-phosphate acyltransferase of Prochlorococcus marinus (strain MIT 9215).